The primary structure comprises 429 residues: Lysine-specific demethylase JMJ30 (429 aa).

The region spanning 272-429 (SSPMEPTYLA…WSNEAESSSS (158 aa)) is the JmjC domain. Residues His-326, Asp-328, and His-405 each coordinate Fe cation.

The protein belongs to the JARID1 histone demethylase family. As to quaternary structure, interacts with EFM. Binds to ATXR2, ARF7 and ARF19. Requires Fe(2+) as cofactor. As to expression, expressed ubiquitously in vasculatures, roots, rosette leaves, stems, inflorescences and siliques. Mainly present in the root meristem and root differentiation area. Observed at high level in callus.

It localises to the nucleus. Its subcellular location is the cytoplasm. It is found in the endoplasmic reticulum. It carries out the reaction N(6),N(6),N(6)-trimethyl-L-lysyl(36)-[histone H3] + 2 2-oxoglutarate + 2 O2 = N(6)-methyl-L-lysyl(36)-[histone H3] + 2 formaldehyde + 2 succinate + 2 CO2. It catalyses the reaction N(6),N(6),N(6)-trimethyl-L-lysyl(27)-[histone H3] + 2 2-oxoglutarate + 2 O2 = N(6)-methyl-L-lysyl(27)-[histone H3] + 2 formaldehyde + 2 succinate + 2 CO2. The enzyme catalyses N(6),N(6)-dimethyl-L-lysyl(36)-[histone H3] + 2 2-oxoglutarate + 2 O2 = L-lysyl(36)-[histone H3] + 2 formaldehyde + 2 succinate + 2 CO2. Functionally, histone demethylase that demethylates 'Lys-36' (H3K36me) of histone H3 with a specific activity for H3K36me3 and H3K36me2. Also active on 'Lys-27' (H3K27me) of histone H3 with a specific activity for H3K27me3 and H3K27me2. No activity on H3K36me1 and H3K27me1. Involved in the control of flowering time by demethylating H3K36me2 at the FT locus and repressing its expression. Acts within the central clock and contributes, in parallel with LUX, to temperature compensation, probably as a component of the evening complex, to maintain circadian period at increasing temperatures; this mechanism involves binding to and regulation of CCA1 and PRR7 promoters. Works in concert with TOC1 to promote the morning-phased clock genes CCA1 and LHY which function as components of the central oscillator. Together with JMJ32, regulates the flowering-repressor FLOWERING LOCUS C (FLC) locus by removing the repressive histone modification H3 lysine 27 trimethylation (H3K27me3), especially at elevated temperatures (e.g. 29 degrees Celsius), thus preventing extreme precocious flowering. JMJ30 and JMJ32 are regulators involved in the integration of abscisic acid (ABA) and brassinosteroids (BR) signaling pathways. Together with JMJ32, controls ABA-mediated growth arrest during the post-germination stage in unfavorable conditions, and responses to ABA during root development, via the removal of repressive histone mark (H3K27me3) from the SnRK2.8 promoter, thus promoting SnRK2.8 expression and subsequent kinase-dependent ABI3 activation. In addition, removes the repressive histone marks (H3K27me3) from the BZR1 locus in response to stress and ABA, thus activating the BR signaling pathway which, in turn, inhibits the ABA signaling pathway. Able to drive tissue identity changes to promote callus formation form somatic cells via a massive genome-wide chromatin remodeling (e.g. H3K9me3 demethylation) leading to the induction of Lateral organ Boundaries-Domain (LBD) genes (e.g. LBD16 and LBD29) that establish root primordia; when in complex with ARF proteins (e.g. ARF7 and ARF19), recruits ATXR2 which promotes the deposition of H3K36me3 at LBD genes promoters, thus ensuring their stable activation during callus formation. The protein is Lysine-specific demethylase JMJ30 of Arabidopsis thaliana (Mouse-ear cress).